Here is a 159-residue protein sequence, read N- to C-terminus: Endoribonuclease YbeY (159 aa).

Residues His-119, His-123, and His-129 each contribute to the Zn(2+) site.

This sequence belongs to the endoribonuclease YbeY family. Requires Zn(2+) as cofactor.

It localises to the cytoplasm. Functionally, single strand-specific metallo-endoribonuclease involved in late-stage 70S ribosome quality control and in maturation of the 3' terminus of the 16S rRNA. In Acinetobacter baylyi (strain ATCC 33305 / BD413 / ADP1), this protein is Endoribonuclease YbeY.